The chain runs to 543 residues: Glucose-6-phosphate isomerase (543 aa).

Glutamate 351 (proton donor) is an active-site residue. Active-site residues include histidine 382 and lysine 511.

Belongs to the GPI family.

It localises to the cytoplasm. The enzyme catalyses alpha-D-glucose 6-phosphate = beta-D-fructose 6-phosphate. It functions in the pathway carbohydrate biosynthesis; gluconeogenesis. Its pathway is carbohydrate degradation; glycolysis; D-glyceraldehyde 3-phosphate and glycerone phosphate from D-glucose: step 2/4. In terms of biological role, catalyzes the reversible isomerization of glucose-6-phosphate to fructose-6-phosphate. The sequence is that of Glucose-6-phosphate isomerase from Hydrogenovibrio crunogenus (strain DSM 25203 / XCL-2) (Thiomicrospira crunogena).